The sequence spans 339 residues: NADH-quinone oxidoreductase subunit H (339 aa).

8 helical membrane passes run 19–39, 87–107, 120–140, 153–173, 191–211, 253–273, 275–295, and 310–330; these read LLKI…LTLA, FLLG…VVPF, LLYI…AGWA, SAAQ…GVLM, FWEW…ISAV, ILVA…PVPF, PDSI…FLWF, and LGWK…GAMM.

It belongs to the complex I subunit 1 family. NDH-1 is composed of 14 different subunits. Subunits NuoA, H, J, K, L, M, N constitute the membrane sector of the complex.

Its subcellular location is the cell inner membrane. The catalysed reaction is a quinone + NADH + 5 H(+)(in) = a quinol + NAD(+) + 4 H(+)(out). Its function is as follows. NDH-1 shuttles electrons from NADH, via FMN and iron-sulfur (Fe-S) centers, to quinones in the respiratory chain. The immediate electron acceptor for the enzyme in this species is believed to be ubiquinone. Couples the redox reaction to proton translocation (for every two electrons transferred, four hydrogen ions are translocated across the cytoplasmic membrane), and thus conserves the redox energy in a proton gradient. This subunit may bind ubiquinone. This is NADH-quinone oxidoreductase subunit H from Methylobacillus flagellatus (strain ATCC 51484 / DSM 6875 / VKM B-1610 / KT).